A 156-amino-acid polypeptide reads, in one-letter code: Transcription antitermination protein NusB (156 aa).

The protein belongs to the NusB family.

Involved in transcription antitermination. Required for transcription of ribosomal RNA (rRNA) genes. Binds specifically to the boxA antiterminator sequence of the ribosomal RNA (rrn) operons. The sequence is that of Transcription antitermination protein NusB from Bartonella tribocorum (strain CIP 105476 / IBS 506).